A 357-amino-acid chain; its full sequence is Geranylgeranyl pyrophosphate synthase spyE (357 aa).

A disordered region spans residues 36–60; that stretch reads EAQSQAVPGTRTETEPTGSSPSDLQ. Residues 50 to 59 are compositionally biased toward polar residues; it reads EPTGSSPSDL. The isopentenyl diphosphate site is built by Lys-84, Arg-87, and His-116. Asp-123 and Asp-127 together coordinate Mg(2+). Position 132 (Arg-132) interacts with dimethylallyl diphosphate. An isopentenyl diphosphate-binding site is contributed by Arg-133. Dimethylallyl diphosphate-binding residues include Lys-210, Thr-211, and Gln-244. Asp-247 contacts Mg(2+). 3 residues coordinate dimethylallyl diphosphate: Asn-251, Lys-261, and Lys-271.

The protein belongs to the FPP/GGPP synthase family. Mg(2+) is required as a cofactor.

The enzyme catalyses isopentenyl diphosphate + dimethylallyl diphosphate = (2E)-geranyl diphosphate + diphosphate. It catalyses the reaction isopentenyl diphosphate + (2E)-geranyl diphosphate = (2E,6E)-farnesyl diphosphate + diphosphate. It carries out the reaction isopentenyl diphosphate + (2E,6E)-farnesyl diphosphate = (2E,6E,10E)-geranylgeranyl diphosphate + diphosphate. It participates in secondary metabolite biosynthesis; terpenoid biosynthesis. Functionally, geranylgeranyl pyrophosphate synthase; part of the gene cluster that mediates the biosynthesis of meroterpenoids called sartorypyrones. Within the pathway, spyE provides the spyF cosubstrate geranylgeranyl pyrophosphate (GGPP) for the prenylation of triacetic acid lactone (TAL). The biosynthesis of sartorypyrones begins with the production of triacetic acid lactone (TAL) by the NR-PKS spyA using one molecule of acetyl-CoA and two molecules of malonyl-CoA. The prenyltransferase spyF then conjugates geranylgeranyl pyrophosphate (GGPP) to TAL to form geranylgeranyl-triacetate lactone, for which the pathway-specific geranylgeranyl pyrophosphate synthase (GGPS) spyE is required to provide GGPP. Subsequently, geranylgeranyl-triacetate lactone is epoxidized at the terminal olein by the FAD-dependent monooxygenase spyC, followed by cyclization of the terpenoid component catalyzed by the terpene cyclase spyD to produce both the bicyclic sartorypyrone F and the monocyclic sartorypyrone D. Finally, the last step of the biosynthesis involves the acetylation of the meroterpenoids sartorypyrones D and F by the acetyltransferase SpyB to produce sartorypyrones A and G, respectively. This Aspergillus fumigatus (strain ATCC MYA-4609 / CBS 101355 / FGSC A1100 / Af293) (Neosartorya fumigata) protein is Geranylgeranyl pyrophosphate synthase spyE.